The sequence spans 1164 residues: Protein PLASTID MOVEMENT IMPAIRED 1-RELATED 1 (1164 aa).

Positions 30 to 54 are disordered; it reads KNPRGSVAGSNKTPTKPLSRSNLAE. Polar residues predominate over residues 37–51; the sequence is AGSNKTPTKPLSRSN. Residues 69-217 form the C2 NT-type domain; sequence INHVRNRRFN…TLSMSFGYTV (149 aa). Polar residues predominate over residues 224–263; it reads PASSGSTQNFRSSSNVKQTSNNTGLTRAISAKSSLGNGKS. Disordered regions lie at residues 224–268, 466–486, 1038–1063, and 1124–1164; these read PASS…SRRY, APEE…PKDA, SELK…PMEE, and GSAK…IMPK. Basic and acidic residues-rich tracts occupy residues 469 to 486 and 1052 to 1062; these read EGNK…PKDA and SDAKKEEKPME.

The protein resides in the cytoplasm. In terms of biological role, together with PMI1, necessary for chloroplast and nuclear photorelocation movements via the regulation of chloroplast-actin (cp-actin) filaments in pavement cells. The polypeptide is Protein PLASTID MOVEMENT IMPAIRED 1-RELATED 1 (Arabidopsis thaliana (Mouse-ear cress)).